The chain runs to 91 residues: Uteroglobin (91 aa).

The signal sequence occupies residues 1 to 21; it reads MKLAVTLTLVTLALCCSSASA.

It belongs to the secretoglobin family. As to quaternary structure, antiparallel homodimer; disulfide-linked. Interaction with LMBR1L has been observed in PubMed:16423471, but not in PubMed:23964685. As to expression, club cells (nonciliated cells of the surface epithelium of the pulmonary airways).

Its subcellular location is the secreted. Functionally, binds phosphatidylcholine, phosphatidylinositol, polychlorinated biphenyls (PCB) and weakly progesterone, potent inhibitor of phospholipase A2. The polypeptide is Uteroglobin (SCGB1A1) (Homo sapiens (Human)).